Here is a 212-residue protein sequence, read N- to C-terminus: MESAATAVVPPAAAATTATATDDNLQSSDSSSPADAVNRLIHAFSQRQQHLLDKTVPHVLYRWIACLCVVLIYIVRVYFVEGFYIITYAIGIYLLNLIIAFLSPQEDPEASLTSGGSLPTRRSDEYRPFVRRLPEFKFWLSIIRAFIIGFMMTFFEVFDVPVFWPILLFYWVMLFFLTMRKQIQHMIKYRYVPFSFGKKQYGKKPAPTESSE.

An N-acetylmethionine modification is found at Met1. 4 helical membrane passes run 55-75, 82-102, 135-155, and 157-177; these read TVPH…IYIV, GFYI…IAFL, EFKF…MTFF, and VFDV…LFFL.

This sequence belongs to the RER1 family.

It localises to the membrane. Its function is as follows. Involved in the retrieval of endoplasmic reticulum membrane proteins from the early Golgi compartment. The protein is Protein RER1C (RER1C) of Arabidopsis thaliana (Mouse-ear cress).